The primary structure comprises 350 residues: Twinfilin-1 (350 aa).

2 ADF-H domains span residues 4–139 and 177–313; these read QTGI…KYLA and GIAF…EEVH. The tract at residues 316–350 is disordered; the sequence is QHAHKQNFAKPKGPAGKRGIRRLIRGPAEAETAND.

Belongs to the actin-binding proteins ADF family. Twinfilin subfamily. Interacts with G-actin; ADP-actin form.

It localises to the cytoplasm. It is found in the cytoskeleton. Its function is as follows. Actin-binding protein involved in motile and morphological processes. Inhibits actin polymerization, likely by sequestering G-actin. The protein is Twinfilin-1 (twf1) of Xenopus tropicalis (Western clawed frog).